A 353-amino-acid polypeptide reads, in one-letter code: Glycerol-3-phosphate dehydrogenase [NAD(P)+] (353 aa).

Residues tryptophan 11, arginine 40, and lysine 115 each contribute to the NADPH site. Sn-glycerol 3-phosphate contacts are provided by lysine 115, glycine 156, and serine 158. Alanine 160 is a binding site for NADPH. Positions 211, 264, 274, 275, and 276 each coordinate sn-glycerol 3-phosphate. The active-site Proton acceptor is the lysine 211. Arginine 275 provides a ligand contact to NADPH. 2 residues coordinate NADPH: valine 299 and glutamate 301.

This sequence belongs to the NAD-dependent glycerol-3-phosphate dehydrogenase family.

The protein resides in the cytoplasm. The enzyme catalyses sn-glycerol 3-phosphate + NAD(+) = dihydroxyacetone phosphate + NADH + H(+). The catalysed reaction is sn-glycerol 3-phosphate + NADP(+) = dihydroxyacetone phosphate + NADPH + H(+). Its pathway is membrane lipid metabolism; glycerophospholipid metabolism. In terms of biological role, catalyzes the reduction of the glycolytic intermediate dihydroxyacetone phosphate (DHAP) to sn-glycerol 3-phosphate (G3P), the key precursor for phospholipid synthesis. In Polaromonas sp. (strain JS666 / ATCC BAA-500), this protein is Glycerol-3-phosphate dehydrogenase [NAD(P)+].